The chain runs to 318 residues: Inner membrane protein YbhN (318 aa).

Topologically, residues 1 to 13 are periplasmic; sequence MSKSHPRWRLAKK. A helical membrane pass occupies residues 14–34; the sequence is ILTWLFFIAVIVLLVVYAKKV. Topologically, residues 35–50 are cytoplasmic; the sequence is DWEEVWKVIRDYNRVA. A helical transmembrane segment spans residues 51 to 71; the sequence is LLSAVGLVVVSYLIYGCYDLL. The Periplasmic portion of the chain corresponds to 72-85; that stretch reads ARFYCGHKLAKRQV. The helical transmembrane segment at 86 to 106 threads the bilayer; it reads MLVSFICYAFNLTLSTWVGGI. The Cytoplasmic portion of the chain corresponds to 107–125; that stretch reads GMRYRLYSRLGLPGSTITR. A helical membrane pass occupies residues 126–146; it reads IFSLSITTNWLGYILLAGIIF. Residues 147 to 165 are Periplasmic-facing; sequence TAGVVELPDHWYVDQTTLR. The helical transmembrane segment at 166–186 threads the bilayer; it reads ILGIGLLMIIAVYLWFCAFAK. At 187–205 the chain is on the cytoplasmic side; the sequence is HRHMTIKGQKLVLPSWKFA. The chain crosses the membrane as a helical span at residues 206-226; the sequence is LAQMLISSVNWMVMGAIIWLL. Residues 227-233 lie on the Periplasmic side of the membrane; the sequence is LGQSVNY. A run of 2 helical transmembrane segments spans residues 234–254 and 255–275; these read FFVLGVLLVSSIAGVIVHIPA and GIGVLEAVFIALLAGEHTSKG. The Periplasmic segment spans residues 276–277; that stretch reads TI. The helical transmembrane segment at 278-298 threads the bilayer; sequence IAALLAYRVLYYFIPLLLALI. At 299–318 the chain is on the cytoplasmic side; sequence CYLLLESQAKKLRAKNEAAM.

To Synechocystis PCC 6803 slr0712.

It is found in the cell inner membrane. This is Inner membrane protein YbhN (ybhN) from Escherichia coli (strain K12).